The chain runs to 810 residues: Type I restriction enzyme EcoAI endonuclease subunit (810 aa).

One can recognise a Helicase ATP-binding domain in the interval 183 to 343 (EAVSNGQNRV…TDYFGDPVYV (161 aa)). An ATP-binding site is contributed by 197-203 (ATGTGKT). The Helicase C-terminal domain occupies 412–575 (TITDYLKRTN…DIADPESDFE (164 aa)). The span at 578 to 588 (LEEISEHDEEQ) shows a compositional bias: acidic residues. The disordered stretch occupies residues 578–608 (LEEISEHDEEQVTGVDEPPAPPYQVTDTDDV).

The protein belongs to the HsdR family. In terms of assembly, the type I restriction/modification system is composed of three polypeptides R, M and S. The restriction enzyme has stoichiometry R(2)M(2)S(1) while the methyltransferase is M(2)S(1).

It catalyses the reaction Endonucleolytic cleavage of DNA to give random double-stranded fragments with terminal 5'-phosphates, ATP is simultaneously hydrolyzed.. Its function is as follows. The subtype B restriction (R) subunit of a type I restriction enzyme that recognizes 5'-GAGN(7)GTCA-3' and cleaves a random distance away. Subunit R is required for both nuclease and ATPase activities, but not for modification. After locating a non-methylated recognition site, the enzyme complex serves as a molecular motor that translocates DNA in an ATP-dependent manner until a collision occurs that triggers cleavage. In Escherichia coli, this protein is Type I restriction enzyme EcoAI endonuclease subunit.